The chain runs to 596 residues: MKNIRNFSIIAHIDHGKSTLADRLIQECGAVSSREMSSQIMDTMDIEKERGITIKAQSVRLNYTLDGQNFVLNLIDTPGHVDFSYEVSRSLASCEGALLVVDASQGVEAQTIANVYIALENNLEIIPVINKIDLPAADPQRVKDEIEHVIGLDCSGAIEVSAKTGAGINELLEAIVRRVPAPDANDALPTKALIYDSWFDNYLGALALVRIYDGEIKKNDEVLVMGTNKKHIVLDLMYPHPIAPIKTARIGTGEVGIIVLGLKNVSDVQVGDTITLAKNPTKEPVGGFERAKPFVFAGIYPIETDKFEDLRDALDKLKLNDSSISYEPETSIALGFGFRVGFLGLLHMEVIKERLEREFDLDLIATAPTVTYEVVQTDGQILRIQNPSQLPAVNKIEMIKEPYVRSTIITPTEFLGNIITLLNNRRGVQTKMDYITPERVLLEYDIPMNEIVMDFYDKLKSSTKGYASFDYEPSDYREGDLVKLDIKVAGETVDALSIIVPESKAQSKGRDFVKAMKEIVPRQLFEVAIQASIGNKIIARETVKSMGKNVTAKCYGGDITRKRKLLEKQKEGKKRMKAIGKVNLPQEAFLSVLKID.

The region spanning 2–183 (KNIRNFSIIA…AIVRRVPAPD (182 aa)) is the tr-type G domain. Residues 14–19 (DHGKST) and 130–133 (NKID) contribute to the GTP site.

The protein belongs to the TRAFAC class translation factor GTPase superfamily. Classic translation factor GTPase family. LepA subfamily.

It localises to the cell inner membrane. It catalyses the reaction GTP + H2O = GDP + phosphate + H(+). Functionally, required for accurate and efficient protein synthesis under certain stress conditions. May act as a fidelity factor of the translation reaction, by catalyzing a one-codon backward translocation of tRNAs on improperly translocated ribosomes. Back-translocation proceeds from a post-translocation (POST) complex to a pre-translocation (PRE) complex, thus giving elongation factor G a second chance to translocate the tRNAs correctly. Binds to ribosomes in a GTP-dependent manner. This Campylobacter curvus (strain 525.92) protein is Elongation factor 4.